We begin with the raw amino-acid sequence, 119 residues long: Ribonuclease P protein component (119 aa).

The protein belongs to the RnpA family. As to quaternary structure, consists of a catalytic RNA component (M1 or rnpB) and a protein subunit.

The enzyme catalyses Endonucleolytic cleavage of RNA, removing 5'-extranucleotides from tRNA precursor.. Its function is as follows. RNaseP catalyzes the removal of the 5'-leader sequence from pre-tRNA to produce the mature 5'-terminus. It can also cleave other RNA substrates such as 4.5S RNA. The protein component plays an auxiliary but essential role in vivo by binding to the 5'-leader sequence and broadening the substrate specificity of the ribozyme. The sequence is that of Ribonuclease P protein component from Aeromonas hydrophila subsp. hydrophila (strain ATCC 7966 / DSM 30187 / BCRC 13018 / CCUG 14551 / JCM 1027 / KCTC 2358 / NCIMB 9240 / NCTC 8049).